The primary structure comprises 550 residues: Tether containing UBX domain for GLUT4 (550 aa).

Ala2 carries the post-translational modification N-acetylalanine. Positions 185 to 320 are disordered; it reads AVRSKAPGSP…EPPVDRDPVV (136 aa). Residue Ser193 is modified to Phosphoserine. Over residues 193-206 the composition is skewed to low complexity; it reads SPVSSLSADQASSS. Residues 217–226 show a composition bias toward basic and acidic residues; that stretch reads SRGDLNHEGD. The span at 242–252 shows a compositional bias: polar residues; it reads DAQTKQSTSEP. Residues 313–376 form an interaction with GLUT4 region; it reads PVDRDPVVYH…LVTKAFREAQ (64 aa). A UBX domain is found at 382–458; the sequence is ERYPKVALRV…NLFPAALVHF (77 aa). Ser496 carries the post-translational modification Phosphoserine. The disordered stretch occupies residues 496 to 550; that stretch reads SPPLLPAPDPVSLESEPIAEDGALGPPEPIQGTAQPVKRSLGKVPKWLKLPASKR.

In terms of assembly, interacts with VCP. Interacts with VCPKMT. Interacts with GLUT4. In terms of tissue distribution, ubiquitous.

It localises to the endomembrane system. The protein resides in the endoplasmic reticulum-Golgi intermediate compartment membrane. The protein localises to the cytoplasm. Its subcellular location is the nucleus. Functionally, enhances VCP methylation catalyzed by VCPKMT. Tethering protein that sequesters GLUT4-containing vesicles in the cytoplasm in the absence of insulin. Modulates the amount of GLUT4 that is available at the cell surface. The polypeptide is Tether containing UBX domain for GLUT4 (Aspscr1) (Mus musculus (Mouse)).